The following is a 1358-amino-acid chain: Phosphoinositide 3-kinase regulatory subunit 4 (1358 aa).

Gly2 carries N-myristoyl glycine lipidation. The region spanning Phe26–Leu324 is the Protein kinase domain. ATP is bound by residues Leu32–Val40 and Lys53. The active-site Proton acceptor is the Asp148. 7 HEAT repeats span residues Asn373–Val411, Ile413–Glu450, Ile458–Arg495, Gln531–Arg570, Lys572–Trp610, Ser612–Leu648, and Asp690–Arg726. 4 positions are modified to phosphoserine: Ser808, Ser813, Ser853, and Ser865. The disordered stretch occupies residues Leu875–Cys899. WD repeat units lie at residues Glu991 to Thr1030, Arg1040 to Ser1079, Lys1093 to Thr1134, Leu1139 to Ser1178, Pro1182 to Thr1223, and Pro1237 to Val1278. The interval Lys1307–Val1326 is disordered. Positions Asp1315–Val1326 are enriched in basic and acidic residues. Thr1316 bears the Phosphothreonine mark. One copy of the WD 7 repeat lies at Gly1327–Lys1358.

This sequence belongs to the protein kinase superfamily. Ser/Thr protein kinase family. As to quaternary structure, component of the PI3K (PI3KC3/PI3K-III/class III phosphatidylinositol 3-kinase) complex the core of which is composed of the catalytic subunit PIK3C3, the regulatory subunit PIK3R4 and BECN1 associating with additional regulatory/auxiliary subunits to form alternative complex forms. Alternative complex forms containing a fourth regulatory subunit in a mutually exclusive manner are PI3K complex I (PI3KC3-C1) containing ATG14, and PI3K complex II (PI3KC3-C2) containing UVRAG. PI3KC3-C1 displays a V-shaped architecture with PIK3R4 serving as a bridge between PIK3C3 and the ATG14:BECN1 subcomplex. Both, PI3KC3-C1 and PI3KC3-C2, can associate with further regulatory subunits, such as RUBCN, SH3GLB1/Bif-1, AMBRA1 and NRBF2. PI3KC3-C1 probably associates with PIK3CB. Interacts with RAB7A in the presence of PIK3C3/VPS34. Interacts with NRBF2. Interacts with ARMC3. It depends on Mn(2+) as a cofactor. In terms of processing, myristoylated. Post-translationally, probably autophosphorylated.

Its subcellular location is the late endosome. It is found in the cytoplasmic vesicle. The protein localises to the autophagosome. It localises to the membrane. The enzyme catalyses L-seryl-[protein] + ATP = O-phospho-L-seryl-[protein] + ADP + H(+). The catalysed reaction is L-threonyl-[protein] + ATP = O-phospho-L-threonyl-[protein] + ADP + H(+). In terms of biological role, regulatory subunit of the PI3K complex that mediates formation of phosphatidylinositol 3-phosphate; different complex forms are believed to play a role in multiple membrane trafficking pathways: PI3KC3-C1 is involved in initiation of autophagosomes and PI3KC3-C2 in maturation of autophagosomes and endocytosis. Involved in regulation of degradative endocytic trafficking and cytokinesis, probably in the context of PI3KC3-C2. Its function is as follows. Regulatory subunit of the PI3K complex. May regulate membrane trafficking late in the endocytic pathway. This chain is Phosphoinositide 3-kinase regulatory subunit 4 (PIK3R4), found in Pongo abelii (Sumatran orangutan).